Here is a 413-residue protein sequence, read N- to C-terminus: Multidrug resistance protein MdtM (413 aa).

The Cytoplasmic segment spans residues 1–14 (MQRIIQFFSQRATT). A helical transmembrane segment spans residues 15–35 (LFFPMALILYDFAAYLTTDLI). Residues 36 to 51 (QPGIINVVRDFNADVS) are Periplasmic-facing. Residues 52–72 (LAPASVSLYLAGGMALQWLLG) traverse the membrane as a helical segment. The Cytoplasmic segment spans residues 73–81 (PLSDRIGRR). Residues 82–102 (PVLIAGALIFTLACAATLLTT) traverse the membrane as a helical segment. The Periplasmic portion of the chain corresponds to 103–106 (SMTQ). A helical membrane pass occupies residues 107 to 127 (FLVARFVQGTSICFIATVGYV). At 128–140 (TVQEAFGQTKAIK) the chain is on the cytoplasmic side. Residues 141–161 (LMAIITSIVLVAPVIGPLSGA) form a helical membrane-spanning segment. The Periplasmic segment spans residues 162–170 (ALMHFVHWK). Residues 171–191 (VLFGIIAVMGLLALCGLLLAM) form a helical membrane-spanning segment. Residues 192–225 (PETVQRGAVPFSAVSVLRDFRNVFRNPIFLTGAA) lie on the Cytoplasmic side of the membrane. The chain crosses the membrane as a helical span at residues 226–246 (TLSLSYIPMMSWVAVSPVILI). The Periplasmic segment spans residues 247–254 (DAGGMSTS). The helical transmembrane segment at 255–275 (QFAWAQVPVFGAVIVANMIVV) threads the bilayer. At 276-289 (RLVKDPTRPRFIWR) the chain is on the cytoplasmic side. Helical transmembrane passes span 290 to 310 (AVPI…LLPH) and 311 to 331 (VWLW…MIFP). The Cytoplasmic segment spans residues 332–351 (TLFRFTLFSNNLPKGTVSAS). A helical transmembrane segment spans residues 352-372 (LNMVILTVMAVSVEVGRWLWF). Over 373 to 376 (HGGR) the chain is Periplasmic. A helical transmembrane segment spans residues 377 to 397 (LPFHLLAAVAGVIVVFTLATL). Residues 398–413 (LQRVRQHEAAELAAEK) lie on the Cytoplasmic side of the membrane.

The protein belongs to the major facilitator superfamily.

The protein resides in the cell inner membrane. Functionally, proton-dependent efflux pump. Confers resistance to a broad spectrum of chemically unrelated substrates. The chain is Multidrug resistance protein MdtM (mdtM) from Salmonella typhimurium (strain LT2 / SGSC1412 / ATCC 700720).